Consider the following 1222-residue polypeptide: Serine/threonine-protein kinase WNK4 (1222 aa).

Over residues 1 to 17 (MLAPRNTETGVPMSQTE) the composition is skewed to polar residues. A disordered region spans residues 1–165 (MLAPRNTETG…DTETQAVATS (165 aa)). The span at 90–101 (AGPTRSPPSSSK) shows a compositional bias: low complexity. Position 95 is a phosphoserine (Ser-95). Residues 135-152 (EPPRVPDAAARERRREQE) show a composition bias toward basic and acidic residues. Glycyl lysine isopeptide (Lys-Gly) (interchain with G-Cter in ubiquitin) cross-links involve residues Lys-154 and Lys-172. Residues 171–429 (LKFDIEIGRG…IQDLLAHAFF (259 aa)) enclose the Protein kinase domain. Ser-181 contributes to the ATP binding site. Residues Lys-183, Lys-223, and Lys-238 each participate in a glycyl lysine isopeptide (Lys-Gly) (interchain with G-Cter in ubiquitin) cross-link. ATP contacts are provided by residues 251 to 254 (TELM) and Lys-301. The active-site Proton acceptor is the Asp-318. Lys-325 participates in a covalent cross-link: Glycyl lysine isopeptide (Lys-Gly) (interchain with G-Cter in ubiquitin). Phosphoserine; by autocatalysis occurs at positions 328 and 332. Residues Lys-384, Lys-390, Lys-447, and Lys-451 each participate in a glycyl lysine isopeptide (Lys-Gly) (interchain with G-Cter in ubiquitin) cross-link. The segment at 525-562 (RELEVLPPDSGPPPATVSLAPGPPSAFPPEPEEPEADQ) is disordered. Over residues 533-553 (DSGPPPATVSLAPGPPSAFPP) the composition is skewed to pro residues. An interaction with KLHL3 region spans residues 554-564 (EPEEPEADQHQ). Residue Ser-572 is modified to Phosphoserine. 4 disordered regions span residues 626–659 (RSGP…MRKN), 747–809 (DAGP…GAPF), 877–896 (SYPQ…SPPS), and 927–976 (SPGL…AQPL). Composition is skewed to low complexity over residues 627–638 (SGPGSDFSPGDS), 757–769 (ALSP…ALPA), 793–807 (STSP…SPGA), and 877–890 (SYPQ…SLPV). Residues 935–944 (PPAPPGPLPS) are compositionally biased toward pro residues. The span at 953–963 (DQESLSAQTAE) shows a compositional bias: polar residues. Lys-990 is covalently cross-linked (Glycyl lysine isopeptide (Lys-Gly) (interchain with G-Cter in ubiquitin)). The RFXV motif signature appears at 996-999 (RFQV). Positions 1000-1087 (TSSKEPAEPP…SSPILSHPSP (88 aa)) are disordered. A Phosphoserine modification is found at Ser-1014. Residues 1014-1032 (SPTLSRSLKLPSPPLTSES) are compositionally biased toward low complexity. Residues 1044–1056 (ETREALAESDRAA) are compositionally biased toward basic and acidic residues. Glycyl lysine isopeptide (Lys-Gly) (interchain with G-Cter in ubiquitin) cross-links involve residues Lys-1123, Lys-1136, and Lys-1137. A disordered region spans residues 1166-1222 (RRLSKGSFPTSRRNSLQRSDLPGPGIMRRNSLSGSSTGSQEQRASKGVTFAGDIGRM). Composition is skewed to polar residues over residues 1172-1183 (SFPTSRRNSLQR) and 1195-1207 (NSLS…SQEQ). Ser-1196 carries the phosphoserine modification.

This sequence belongs to the protein kinase superfamily. Ser/Thr protein kinase family. WNK subfamily. Interacts with the C-terminal region of KCNJ1. Interacts with WNK1 and WNK3. Interacts with KLHL3. The cofactor is Mg(2+). Post-translationally, autophosphorylated at Ser-328 and Ser-332, promoting its activation. Phosphorylated by WNK1 and WNK3. Phosphorylated at Ser-572 in a MAP3K15/ASK3-dependent process in response to osmotic stress or hypotonic low-chloride stimulation. In terms of processing, ubiquitinated by the BCR(KLHL3) complex, leading to its degradation. Also ubiquitinated by the BCR(KLHL2) complex. As to expression, locates to the distal convoluted tubule, the medullary collecting duct and the cortical collecting duct of the kidney. Expressed in pancreatic duct.

Its subcellular location is the cell junction. It localises to the tight junction. The enzyme catalyses L-seryl-[protein] + ATP = O-phospho-L-seryl-[protein] + ADP + H(+). It catalyses the reaction L-threonyl-[protein] + ATP = O-phospho-L-threonyl-[protein] + ADP + H(+). Activation requires autophosphorylation of Ser-328 and Ser-332. Autophosphorylation and subsequent activation is inhibited by increases in intracellular ionic strength: Cl(-) potently inhibits WNK4 kinase activity via direct binding. Also inhibited by K(+) ions. In terms of biological role, serine/threonine-protein kinase component of the WNK4-SPAK/OSR1 kinase cascade, which acts as a key regulator of ion transport in the distal nephron and blood pressure. The WNK4-SPAK/OSR1 kinase cascade is composed of WNK4, which mediates phosphorylation and activation of downstream kinases OXSR1/OSR1 and STK39/SPAK. Following activation, OXSR1/OSR1 and STK39/SPAK catalyze phosphorylation of ion cotransporters, such as SLC12A1/NKCC2, SLC12A2/NKCC1, SLC12A3/NCC, SLC12A5/KCC2 or SLC12A6/KCC3, regulating their activity. Acts as a molecular switch that regulates the balance between renal salt reabsorption and K(+) secretion by modulating the activities of renal transporters and channels, including the Na-Cl cotransporter SLC12A3/NCC and the K(+) channel, KCNJ1/ROMK. Regulates NaCl reabsorption in the distal nephron by activating the thiazide-sensitive Na-Cl cotransporter SLC12A3/NCC in distal convoluted tubule cells of kidney: activates SLC12A3/NCC in a OXSR1/OSR1- and STK39/SPAK-dependent process. Also acts as a scaffold protein independently of its protein kinase activity: negatively regulates cell membrane localization of various transporters and channels (CFTR, KCNJ1/ROMK, SLC4A4, SLC26A9 and TRPV4) by clathrin-dependent endocytosis. Also inhibits the activity of the epithelial Na(+) channel (ENaC) SCNN1A, SCNN1B, SCNN1D in a inase-independent mechanism. May also phosphorylate NEDD4L. This is Serine/threonine-protein kinase WNK4 from Mus musculus (Mouse).